The following is a 372-amino-acid chain: Serine protease inhibitor 42Dd (372 aa).

Positions 1-15 are cleaved as a signal peptide; that stretch reads MYYLCIFLWVTSVAC. Residues Asn-197 and Asn-232 are each glycosylated (N-linked (GlcNAc...) asparagine).

The protein belongs to the serpin family. Expressed in the ovary.

It localises to the secreted. In terms of biological role, serine protease inhibitor with activity toward trypsin. Involved in innate immunity to fungal infection by negatively regulating the Toll signaling pathway and suppressing the expression of the antifungal peptide drosomycin. Acts upstream of SPE and grass, and downstream of the fungal cell wall pattern recognition receptor GNBP3. May function specifically in the GNBP3-dependent beta-1,3-glucan branch of the Toll pathway. The sequence is that of Serine protease inhibitor 42Dd from Drosophila melanogaster (Fruit fly).